Consider the following 457-residue polypeptide: Cysteine--tRNA ligase (457 aa).

Cys27 provides a ligand contact to Zn(2+). Positions 29–39 (PTVYDFAHIGN) match the 'HIGH' region motif. Zn(2+) contacts are provided by Cys211, His236, and Glu240. A 'KMSKS' region motif is present at residues 269-273 (KMSKS). Residue Lys272 participates in ATP binding.

The protein belongs to the class-I aminoacyl-tRNA synthetase family. In terms of assembly, monomer. Zn(2+) serves as cofactor.

It is found in the cytoplasm. The catalysed reaction is tRNA(Cys) + L-cysteine + ATP = L-cysteinyl-tRNA(Cys) + AMP + diphosphate. This is Cysteine--tRNA ligase from Ehrlichia ruminantium (strain Welgevonden).